Reading from the N-terminus, the 909-residue chain is Tubulin polyglutamylase TTLL7 (909 aa).

The TTL domain maps to 40–392 (NGAITANVVG…RASDKKKNLA (353 aa)). Residues Lys162, 168–169 (MG), 190–193 (QEYL), and 203–205 (KFD) each bind ATP. Position 229 (Arg229) interacts with L-glutamate. 251-252 (TN) is an ATP binding site. Residues Tyr253, Ser254, and Lys273 each contribute to the L-glutamate site. Mg(2+)-binding residues include Asp338, Glu351, and Asn353. Lys369 is an L-glutamate binding site. The interval 390-452 (NLAKQKAEAQ…ISREEYENRH (63 aa)) is c-MTBD region. Disordered regions lie at residues 517–580 (DEKL…KVSY) and 603–688 (KAAR…PSIS). The segment covering 518–531 (EKLSGKPTRPKEPR) has biased composition (basic and acidic residues). Residues 532–542 (TLSSMPESTQT) show a composition bias toward polar residues. The span at 548-562 (NYSSHSSSNSTGSSS) shows a compositional bias: low complexity. Residues 571–580 (KEGKEKKVSY) are compositionally biased toward basic and acidic residues. Positions 604–625 (AARPFSNSSSPSSAASMRRSVS) are enriched in low complexity. Residues 626–657 (CPRSITALNTQSPTTDQRPFSSRISSTITRPL) are compositionally biased toward polar residues. Over residues 658–673 (SGNRTNSLNRSSSSNR) the composition is skewed to low complexity. The segment covering 674-688 (VPQSGTSGSVYPSIS) has biased composition (polar residues).

This sequence belongs to the tubulin--tyrosine ligase family. In terms of assembly, interacts with both alpha- and beta-tubulin (via C-terminal tubulin tails). The cofactor is Mg(2+).

Its subcellular location is the cell projection. The protein localises to the cilium. It localises to the cytoplasm. The protein resides in the cytoskeleton. It is found in the cilium basal body. Its subcellular location is the dendrite. The protein localises to the perikaryon. It catalyses the reaction L-glutamyl-[protein] + L-glutamate + ATP = gamma-L-glutamyl-L-glutamyl-[protein] + ADP + phosphate + H(+). The enzyme catalyses (L-glutamyl)(n)-gamma-L-glutamyl-L-glutamyl-[protein] + L-glutamate + ATP = (L-glutamyl)(n+1)-gamma-L-glutamyl-L-glutamyl-[protein] + ADP + phosphate + H(+). Its function is as follows. Polyglutamylase which modifies tubulin, generating polyglutamate side chains of variable lengths on the gamma-carboxyl group of specific glutamate residues within the C-terminal tail of tubulin. Mediates both ATP-dependent initiation and elongation steps of the polyglutamylation reaction. Preferentially modifies the beta-tubulin tail over an alpha-tail. Competes with monoglycylase TTLL3 for modification site on beta-tubulin substrate, thereby creating an anticorrelation between glycylation and glutamylation reactions. This is Tubulin polyglutamylase TTLL7 from Xenopus tropicalis (Western clawed frog).